Consider the following 258-residue polypeptide: uncharacterized protein (258 aa).

This is an uncharacterized protein from Bacillus sp. (strain OxB-1).